The following is a 65-amino-acid chain: UPF0434 protein BQ10150 (65 aa).

It belongs to the UPF0434 family.

The sequence is that of UPF0434 protein BQ10150 from Bartonella quintana (strain Toulouse) (Rochalimaea quintana).